A 98-amino-acid chain; its full sequence is NADH-ubiquinone oxidoreductase chain 4L (98 aa).

The next 3 membrane-spanning stretches (helical) occupy residues 1 to 21, 29 to 49, and 61 to 81; these read MSLT…GLLM, SLLC…ITIL, and IILL…LVMV.

This sequence belongs to the complex I subunit 4L family. Core subunit of respiratory chain NADH dehydrogenase (Complex I) which is composed of 45 different subunits.

It localises to the mitochondrion inner membrane. It carries out the reaction a ubiquinone + NADH + 5 H(+)(in) = a ubiquinol + NAD(+) + 4 H(+)(out). Its function is as follows. Core subunit of the mitochondrial membrane respiratory chain NADH dehydrogenase (Complex I) which catalyzes electron transfer from NADH through the respiratory chain, using ubiquinone as an electron acceptor. Part of the enzyme membrane arm which is embedded in the lipid bilayer and involved in proton translocation. The sequence is that of NADH-ubiquinone oxidoreductase chain 4L (MT-ND4L) from Mystacina tuberculata (New Zealand lesser short-tailed bat).